The sequence spans 217 residues: UPF0502 protein KPK_3478 (217 aa).

This sequence belongs to the UPF0502 family.

The sequence is that of UPF0502 protein KPK_3478 from Klebsiella pneumoniae (strain 342).